We begin with the raw amino-acid sequence, 315 residues long: Porphobilinogen deaminase (315 aa).

At cysteine 241 the chain carries S-(dipyrrolylmethanemethyl)cysteine.

This sequence belongs to the HMBS family. In terms of assembly, monomer. Dipyrromethane serves as cofactor.

The catalysed reaction is 4 porphobilinogen + H2O = hydroxymethylbilane + 4 NH4(+). Its pathway is porphyrin-containing compound metabolism; protoporphyrin-IX biosynthesis; coproporphyrinogen-III from 5-aminolevulinate: step 2/4. Its function is as follows. Tetrapolymerization of the monopyrrole PBG into the hydroxymethylbilane pre-uroporphyrinogen in several discrete steps. This Nitratidesulfovibrio vulgaris (strain DP4) (Desulfovibrio vulgaris) protein is Porphobilinogen deaminase.